The chain runs to 388 residues: Calreticulin (388 aa).

The signal sequence occupies residues 1 to 17; the sequence is MQLSLLVGLVCFSAINA. Cys103 and Cys135 form a disulfide bridge. The an alpha-D-glucoside site is built by Tyr107, Lys109, Tyr126, and Asp133. Repeat copies occupy residues 189–200, 208–219, 225–236, 242–253, 257–267, 271–281, and 285–295. The segment at 189–253 is 4 X approximate repeats; it reads AESGELEADW…DAKKPEDWDD (65 aa). The disordered stretch occupies residues 193-282; that stretch reads ELEADWDFLP…WKPKQKKNPA (90 aa). Positions 205 to 215 are enriched in basic and acidic residues; sequence KIKDPDAKKPE. The segment covering 216–227 has biased composition (acidic residues); sequence DWDEREFIDDED. Basic and acidic residues predominate over residues 228–249; that stretch reads DKKPEDWDKPEHIPDPDAKKPE. Acidic residues predominate over residues 250–259; it reads DWDDEMDGEW. Positions 257–295 are 3 X approximate repeats; it reads GEWEPPMVDNPEYKGEWKPKQKKNPAYKGKWIHPEIEIP. Asp315 contributes to the an alpha-D-glucoside binding site. Residues 349 to 388 are disordered; it reads REGEKKKGKKTKKQKKKEKNEKIKKEKMKKRKRANRKKKK. Composition is skewed to basic residues over residues 354 to 365 and 373 to 388; these read KKGKKTKKQKKK and KEKMKKRKRANRKKKK.

It belongs to the calreticulin family.

It is found in the endoplasmic reticulum lumen. In terms of biological role, molecular calcium-binding chaperone promoting folding, oligomeric assembly and quality control in the ER via the calreticulin/calnexin cycle. This lectin may interact transiently with almost all of the monoglucosylated glycoproteins that are synthesized in the ER. This chain is Calreticulin (crt-1), found in Onchocerca volvulus.